Reading from the N-terminus, the 123-residue chain is Large ribosomal subunit protein bL12 (123 aa).

Belongs to the bacterial ribosomal protein bL12 family. In terms of assembly, homodimer. Part of the ribosomal stalk of the 50S ribosomal subunit. Forms a multimeric L10(L12)X complex, where L10 forms an elongated spine to which 2 to 4 L12 dimers bind in a sequential fashion. Binds GTP-bound translation factors.

Functionally, forms part of the ribosomal stalk which helps the ribosome interact with GTP-bound translation factors. Is thus essential for accurate translation. The chain is Large ribosomal subunit protein bL12 from Shewanella sp. (strain ANA-3).